We begin with the raw amino-acid sequence, 192 residues long: Putative metal-sulfur cluster biosynthesis proteins YuaD (192 aa).

The MOSC domain maps to 15–179; sequence ADTKSFVTKQ…VYTGDEIEVH (165 aa).

This Bacillus subtilis (strain 168) protein is Putative metal-sulfur cluster biosynthesis proteins YuaD (yuaD).